Consider the following 235-residue polypeptide: Proteasome subunit alpha type-2-B (235 aa).

Residue Lys64 forms a Glycyl lysine isopeptide (Lys-Gly) (interchain with G-Cter in ubiquitin) linkage.

The protein belongs to the peptidase T1A family. In terms of assembly, component of the 20S core complex of the 26S proteasome. The 26S proteasome is composed of a core protease (CP), known as the 20S proteasome, capped at one or both ends by the 19S regulatory particle (RP/PA700). The 20S proteasome core is composed of 28 subunits that are arranged in four stacked rings, resulting in a barrel-shaped structure. The two end rings are each formed by seven alpha subunits, and the two central rings are each formed by seven beta subunits. The catalytic chamber with the active sites is on the inside of the barrel.

The protein resides in the cytoplasm. It is found in the nucleus. Functionally, the proteasome is a multicatalytic proteinase complex which is characterized by its ability to cleave peptides with Arg, Phe, Tyr, Leu, and Glu adjacent to the leaving group at neutral or slightly basic pH. The proteasome has an ATP-dependent proteolytic activity. This chain is Proteasome subunit alpha type-2-B (PAB2), found in Arabidopsis thaliana (Mouse-ear cress).